Here is a 134-residue protein sequence, read N- to C-terminus: Small ribosomal subunit protein uS11 (134 aa).

The protein belongs to the universal ribosomal protein uS11 family. In terms of assembly, part of the 30S ribosomal subunit. Interacts with proteins S7 and S18. Binds to IF-3.

Functionally, located on the platform of the 30S subunit, it bridges several disparate RNA helices of the 16S rRNA. Forms part of the Shine-Dalgarno cleft in the 70S ribosome. The polypeptide is Small ribosomal subunit protein uS11 (Micrococcus luteus (strain ATCC 4698 / DSM 20030 / JCM 1464 / CCM 169 / CCUG 5858 / IAM 1056 / NBRC 3333 / NCIMB 9278 / NCTC 2665 / VKM Ac-2230) (Micrococcus lysodeikticus)).